The chain runs to 1258 residues: Cohesin subunit SA-1 (1258 aa).

Residues 1 to 84 are disordered; it reads MITSELPVLQ…HPQQNGEGEP (84 aa). A compositionally biased stretch (polar residues) spans 10–19; sequence QDSTNETTAH. Ser-24 is subject to Phosphoserine. The segment covering 53 to 62 has biased composition (basic and acidic residues); sequence SPGEKSRIEA. The SCD domain maps to 296 to 381; that stretch reads FVHRYRDAIA…NRFKDRIVSM (86 aa). Ser-756, Ser-1062, and Ser-1065 each carry phosphoserine. Disordered regions lie at residues 1055–1096 and 1129–1148; these read GGED…SLDN and MGDQ…DFLH. Residues 1062–1074 show a composition bias toward low complexity; that stretch reads SVNSGSSSSKTSS. A compositionally biased stretch (basic residues) spans 1076-1087; it reads RNKKGRPPLHKK. At Ser-1093 the chain carries Phosphoserine. Residues 1137–1146 are compositionally biased toward basic and acidic residues; that stretch reads ESEHGSEPDF. A Glycyl lysine isopeptide (Lys-Gly) (interchain with G-Cter in SUMO2) cross-link involves residue Lys-1161.

This sequence belongs to the SCC3 family. As to quaternary structure, cohesin complexes are composed of a heterodimer between a SMC1 protein (SMC1A or SMC1B) and SMC3, which are attached via their hinge domain, and RAD21 which link them at their heads, and one STAG protein (STAG1, STAG2 or STAG3). In cohesin complexes, STAG1 is mutually exclusive with STAG2 and STAG3. Interacts directly with RAD21 in cohesin complex. The cohesin complex interacts with the cohesin loading complex subunits NIPBL/Scc2 (via HEAT repeats) and MAU2/Scc4. NIPBL directly contacts all members of the complex, RAD21, SMC1A/B, SMC3 and STAG1. Post-translationally, phosphorylated by PLK1. The large dissociation of cohesin from chromosome arms during prophase is partly due to its phosphorylation.

It is found in the nucleus. It localises to the chromosome. The protein localises to the centromere. Component of cohesin complex, a complex required for the cohesion of sister chromatids after DNA replication. The cohesin complex apparently forms a large proteinaceous ring within which sister chromatids can be trapped. At anaphase, the complex is cleaved and dissociates from chromatin, allowing sister chromatids to segregate. The cohesin complex may also play a role in spindle pole assembly during mitosis. The chain is Cohesin subunit SA-1 (STAG1) from Homo sapiens (Human).